Reading from the N-terminus, the 287-residue chain is Nucleotide-binding protein Sfri_3380 (287 aa).

8 to 15 is a binding site for ATP; the sequence is GRSGSGKS. GTP is bound at residue 56 to 59; that stretch reads DVRN.

Belongs to the RapZ-like family.

Displays ATPase and GTPase activities. This is Nucleotide-binding protein Sfri_3380 from Shewanella frigidimarina (strain NCIMB 400).